A 1726-amino-acid polypeptide reads, in one-letter code: Probable serine/threonine-protein kinase roco4 (1726 aa).

LRR repeat units lie at residues 256-277 (KGKR…ITQM), 280-301 (HLVE…IQLL), 303-324 (SLRI…ICYL), and 326-347 (DLKI…VVQS). A Roc domain is found at 364–544 (KSETWNKVKL…KRLIHEAEKS (181 aa)). GTP is bound by residues 377–384 (GQEGVGKT), 428–432 (DFGGQ), and 487–490 (THSD). In terms of domain architecture, COR spans 591 to 787 (AINSQKERYI…RTYWRNGVLL (197 aa)). Over residues 800–881 (SKQQQLQQQQ…STLNSQQLIN (82 aa)) the composition is skewed to low complexity. Positions 800–890 (SKQQQLQQQQ…NPSVSPLSST (91 aa)) are disordered. The 267-residue stretch at 1026–1292 (IEYEKQIGKG…SYIVKELSEL (267 aa)) folds into the Protein kinase domain. ATP is bound by residues 1032 to 1040 (IGKGGFGLV) and K1055. D1154 (proton acceptor) is an active-site residue. Over residues 1319 to 1331 (ASTSSNADDGSQT) the composition is skewed to polar residues. The tract at residues 1319–1385 (ASTSSNADDG…SSPSTSFINS (67 aa)) is disordered. Positions 1332–1348 (NNNNNNNNNNNNNNNNN) are enriched in low complexity. Over residues 1349 to 1364 (SGSSIALSPSRSFEQQ) the composition is skewed to polar residues. The segment covering 1365-1381 (TTTTTTTTTSPSSPSTS) has biased composition (low complexity). 6 WD repeats span residues 1422–1461 (SVHK…LINE), 1463–1502 (KCPH…IVQQ), 1506–1546 (PHKG…KKHS), 1589–1627 (KHST…ELQK), 1633–1670 (AHHE…KPFT), and 1674–1714 (HHKQ…EKKT).

This sequence belongs to the protein kinase superfamily. TKL Ser/Thr protein kinase family. ROCO subfamily.

It catalyses the reaction L-seryl-[protein] + ATP = O-phospho-L-seryl-[protein] + ADP + H(+). The enzyme catalyses L-threonyl-[protein] + ATP = O-phospho-L-threonyl-[protein] + ADP + H(+). In Dictyostelium discoideum (Social amoeba), this protein is Probable serine/threonine-protein kinase roco4 (roco4).